The chain runs to 336 residues: Glycerol-3-phosphate dehydrogenase [NAD(P)+] (336 aa).

Residues S16, Y17, H37, and K111 each coordinate NADPH. The sn-glycerol 3-phosphate site is built by K111, G140, and T142. A144 is a binding site for NADPH. Sn-glycerol 3-phosphate-binding residues include K196, D249, S259, R260, and N261. The Proton acceptor role is filled by K196. R260 lines the NADPH pocket. Residues V284 and E286 each contribute to the NADPH site.

The protein belongs to the NAD-dependent glycerol-3-phosphate dehydrogenase family.

The protein resides in the cytoplasm. It carries out the reaction sn-glycerol 3-phosphate + NAD(+) = dihydroxyacetone phosphate + NADH + H(+). The enzyme catalyses sn-glycerol 3-phosphate + NADP(+) = dihydroxyacetone phosphate + NADPH + H(+). It participates in membrane lipid metabolism; glycerophospholipid metabolism. In terms of biological role, catalyzes the reduction of the glycolytic intermediate dihydroxyacetone phosphate (DHAP) to sn-glycerol 3-phosphate (G3P), the key precursor for phospholipid synthesis. The polypeptide is Glycerol-3-phosphate dehydrogenase [NAD(P)+] (Actinobacillus pleuropneumoniae serotype 5b (strain L20)).